Consider the following 182-residue polypeptide: Adenine phosphoribosyltransferase (182 aa).

Belongs to the purine/pyrimidine phosphoribosyltransferase family. As to quaternary structure, homodimer.

It is found in the cytoplasm. It carries out the reaction AMP + diphosphate = 5-phospho-alpha-D-ribose 1-diphosphate + adenine. Its pathway is purine metabolism; AMP biosynthesis via salvage pathway; AMP from adenine: step 1/1. Its function is as follows. Catalyzes a salvage reaction resulting in the formation of AMP, that is energically less costly than de novo synthesis. This is Adenine phosphoribosyltransferase from Pseudomonas fluorescens (strain Pf0-1).